The following is a 419-amino-acid chain: Metacaspase-1 (419 aa).

The disordered stretch occupies residues 1–109 (MSGYPGYNNG…PPQGMHAFGQ (109 aa)). Composition is skewed to pro residues over residues 18–37 (QYPP…PPPQ) and 45–61 (QPPP…PPPQ). Over residues 83–95 (SVNSNAYTNGNQN) the composition is skewed to polar residues. Residues histidine 210 and cysteine 266 contribute to the active site.

This sequence belongs to the peptidase C14B family.

In terms of biological role, involved in cell death (apoptosis). The protein is Metacaspase-1 (casA) of Botryotinia fuckeliana (strain B05.10) (Noble rot fungus).